The chain runs to 396 residues: OTU domain-containing protein 3 (396 aa).

The tract at residues 1–49 is disordered; the sequence is MSRKQAAKSRPGSGGRRAEAERKRDERAARRALAKERRNRPDPGGSGCE. Positions 16–41 are enriched in basic and acidic residues; it reads RRAEAERKRDERAARRALAKERRNRP. Residues 64 to 188 form the OTU domain; sequence LKLREVPGDG…GEHYDSVRRI (125 aa). Position 65 is an N6-acetyllysine (K65). The cys-loop stretch occupies residues 69 to 75; sequence VPGDGNC. The active site involves D72. C75 (nucleophile) is an active-site residue. N6-acetyllysine occurs at positions 121 and 128. The variable-loop stretch occupies residues 126–136; that stretch reads LSKPGTFAGND. The segment at 176 to 181 is his-loop; it reads YRYGEH. H181 is an active-site residue. K219 is subject to N6-acetyllysine. One can recognise a UBA-like domain in the interval 229–269; sequence DDVEDAVHKVGSATGCTDFNLIVQNLEAENYNIKSAITALL. A disordered region spans residues 275-381; sequence TGNDAEENHE…RDTGRSEADM (107 aa). 3 stretches are compositionally biased toward basic and acidic residues: residues 280–301, 312–331, and 343–379; these read EENHEPGDRVKQRGPSREEAGS, NEGRMETSEARASPAEESKA, and QRREQQRLEKKKRQEERHRLKALENRNGSRDTGRSEA. The residue at position 290 (K290) is an N6-acetyllysine.

Glucose and fatty acids stimulate CREBBP-dependent acetylation, promoting its nuclear translocation.

The protein resides in the cytoplasm. It is found in the nucleus. It carries out the reaction Thiol-dependent hydrolysis of ester, thioester, amide, peptide and isopeptide bonds formed by the C-terminal Gly of ubiquitin (a 76-residue protein attached to proteins as an intracellular targeting signal).. Deubiquitinating enzyme that hydrolyzes 'Lys-6'- and 'Lys-11'-linked polyubiquitin. Also hydrolyzes heterotypic (mixed and branched) and homotypic chains. Important regulator of energy metabolism. Glucose and fatty acids trigger its nuclear translocation by CBP-dependent acetylation. In the nucleus, deubiquitinates and stabilizes the nuclear receptor PPARD regulating the expression of various genes involved in glucose and lipid metabolism and oxidative phosphorylation. Also acts as a negative regulator of the ribosome quality control (RQC) by mediating deubiquitination of 40S ribosomal proteins RPS10/eS10 and RPS20/uS10, thereby antagonizing ZNF598-mediated 40S ubiquitination. The protein is OTU domain-containing protein 3 (Otud3) of Mus musculus (Mouse).